The sequence spans 317 residues: Acetyl-coenzyme A carboxylase carboxyl transferase subunit alpha (317 aa).

One can recognise a CoA carboxyltransferase C-terminal domain in the interval 33 to 294 (NINKEINCLR…KNRILKDLKE (262 aa)).

Belongs to the AccA family. In terms of assembly, acetyl-CoA carboxylase is a heterohexamer composed of biotin carboxyl carrier protein (AccB), biotin carboxylase (AccC) and two subunits each of ACCase subunit alpha (AccA) and ACCase subunit beta (AccD).

The protein localises to the cytoplasm. It carries out the reaction N(6)-carboxybiotinyl-L-lysyl-[protein] + acetyl-CoA = N(6)-biotinyl-L-lysyl-[protein] + malonyl-CoA. Its pathway is lipid metabolism; malonyl-CoA biosynthesis; malonyl-CoA from acetyl-CoA: step 1/1. Component of the acetyl coenzyme A carboxylase (ACC) complex. First, biotin carboxylase catalyzes the carboxylation of biotin on its carrier protein (BCCP) and then the CO(2) group is transferred by the carboxyltransferase to acetyl-CoA to form malonyl-CoA. This chain is Acetyl-coenzyme A carboxylase carboxyl transferase subunit alpha, found in Wigglesworthia glossinidia brevipalpis.